We begin with the raw amino-acid sequence, 326 residues long: uncharacterized protein (326 aa).

S132 is a binding site for substrate. Y157 acts as the Proton acceptor in catalysis.

It belongs to the NAD(P)-dependent epimerase/dehydratase family. dTDP-glucose dehydratase subfamily.

This is an uncharacterized protein from Methanocaldococcus jannaschii (strain ATCC 43067 / DSM 2661 / JAL-1 / JCM 10045 / NBRC 100440) (Methanococcus jannaschii).